The chain runs to 142 residues: MTNVFVDSRRDLRERAFQALFSLEFGGDNLTAARFAYTYDKNEEEEAELPLFLLTLIQGVSDCRREIDKNISIHLKSGWTLSRLTLIDKSLLRLGLYEIKYHKETPERVALNEIIEIAKKYSDEKSSKFINGVLSQFVLERK.

Belongs to the NusB family.

Involved in transcription antitermination. Required for transcription of ribosomal RNA (rRNA) genes. Binds specifically to the boxA antiterminator sequence of the ribosomal RNA (rrn) operons. This Streptococcus mutans serotype c (strain ATCC 700610 / UA159) protein is Transcription antitermination protein NusB.